Consider the following 439-residue polypeptide: 23S rRNA (uracil(1939)-C(5))-methyltransferase RlmD (439 aa).

Residues 1-54 form the TRAM domain; it reads MTAPVLIESLDQEGRGVAHAEGKVIFIEGALPGEVVTYNAYRRKPSFELAQVGQ. The [4Fe-4S] cluster site is built by Cys-67, Cys-73, Cys-76, and Cys-155. The S-adenosyl-L-methionine site is built by Gln-264, Phe-293, Asn-298, Glu-314, Asn-342, and Asp-363. Cys-391 acts as the Nucleophile in catalysis.

The protein belongs to the class I-like SAM-binding methyltransferase superfamily. RNA M5U methyltransferase family. RlmD subfamily.

It carries out the reaction uridine(1939) in 23S rRNA + S-adenosyl-L-methionine = 5-methyluridine(1939) in 23S rRNA + S-adenosyl-L-homocysteine + H(+). Its function is as follows. Catalyzes the formation of 5-methyl-uridine at position 1939 (m5U1939) in 23S rRNA. The sequence is that of 23S rRNA (uracil(1939)-C(5))-methyltransferase RlmD from Nitrosospira multiformis (strain ATCC 25196 / NCIMB 11849 / C 71).